The following is a 125-amino-acid chain: Inner membrane protein YbaN (125 aa).

Over 1 to 6 (MQRIIL) the chain is Cytoplasmic. A helical transmembrane segment spans residues 7–26 (IIIGWLAVVLGTLGVVLPVL). Residues 27-45 (PTTPFILLAAWCFARSSPR) lie on the Periplasmic side of the membrane. Residues 46-63 (FHAWLLYRSWFGSYLRFW) form a helical membrane-spanning segment. Residues 64–74 (QKHHAMPRGVK) are Cytoplasmic-facing. Residues 75 to 92 (PRAILLILLTFAISLWFV) traverse the membrane as a helical segment. The Periplasmic portion of the chain corresponds to 93-95 (QMP). A helical transmembrane segment spans residues 96 to 118 (WVRIMLLVILACLLFYMWRIPVI). At 119 to 125 (DEKQEKH) the chain is on the cytoplasmic side.

It is found in the cell inner membrane. The polypeptide is Inner membrane protein YbaN (ybaN) (Escherichia coli O157:H7).